Here is a 612-residue protein sequence, read N- to C-terminus: Vitamin B12 transporter BtuB (612 aa).

A signal peptide spans 1–20 (MIKKSLLCTALSVTAFSGWA). The TonB box motif lies at 26–33 (DTLVVTAN). Residues 38–152 (PRSAVLAPIT…IGGVVNIITT (115 aa)) enclose the TBDR plug domain. Residues Ser85, Asn92, and 110-111 (VS) contribute to the cyanocob(III)alamin site. In terms of domain architecture, TBDR beta-barrel spans 155–612 (KPGTELTAGV…EYTLSGSYTF (458 aa)). 3 beta stranded membrane-spanning segments follow: residues 158–165 (TELTAGVG), 169–178 (YQNYDVSTQQ), and 184–195 (TRVTLMGDYAYT). Ca(2+)-binding residues include Asp199, Gln211, Asp213, and Asp215. 2 consecutive transmembrane segments (beta stranded) span residues 217-227 (FLSKTLYGALE) and 232-248 (DTWS…NRTN). Positions 249, 250, and 261 each coordinate Ca(2+). 14 beta stranded membrane passes run 263 to 277 (RKLY…LRFN), 279 to 296 (ELIQ…KDYN), 309 to 325 (TLDE…NSIV), 328 to 337 (HGNVGAGVDW), 353 to 369 (YDQR…QQLG), 371 to 381 (FTFEGAARSDD), 385 to 400 (FGRH…WEFI), 403 to 417 (YRFI…KAPN), 434 to 443 (QSKQWEGAFE), 449 to 458 (VNWRVSGYRN), 473 to 490 (YFNE…TANF), 494 to 509 (PLAH…SRNA), 517 to 529 (RRSK…QLDW), and 535 to 550 (DWGL…YDTD). Residue Thr309 coordinates cyanocob(III)alamin. Position 517 (Arg517) interacts with cyanocob(III)alamin. Tyr551 lines the cyanocob(III)alamin pocket. A run of 3 beta stranded transmembrane segments spans residues 556-570 (PVKM…LAVS), 583-594 (IANRFDKDYETV), and 600-612 (AGRE…SYTF). The TonB C-terminal box motif lies at 595–612 (YGYATAGREYTLSGSYTF).

Belongs to the TonB-dependent receptor family. BtuB (TC 1.B.14.3.1) subfamily.

It localises to the cell outer membrane. In terms of biological role, involved in the active translocation of vitamin B12 (cyanocobalamin) across the outer membrane to the periplasmic space. It derives its energy for transport by interacting with the trans-periplasmic membrane protein TonB. The sequence is that of Vitamin B12 transporter BtuB from Citrobacter freundii.